The sequence spans 208 residues: Uracil phosphoribosyltransferase (208 aa).

5-phospho-alpha-D-ribose 1-diphosphate is bound by residues arginine 78, arginine 103, and 130 to 138; that span reads DPMLATGGS. Uracil contacts are provided by residues isoleucine 193 and 198–200; that span reads GDA. Aspartate 199 serves as a coordination point for 5-phospho-alpha-D-ribose 1-diphosphate.

This sequence belongs to the UPRTase family. Requires Mg(2+) as cofactor.

The enzyme catalyses UMP + diphosphate = 5-phospho-alpha-D-ribose 1-diphosphate + uracil. The protein operates within pyrimidine metabolism; UMP biosynthesis via salvage pathway; UMP from uracil: step 1/1. With respect to regulation, allosterically activated by GTP. Its function is as follows. Catalyzes the conversion of uracil and 5-phospho-alpha-D-ribose 1-diphosphate (PRPP) to UMP and diphosphate. The polypeptide is Uracil phosphoribosyltransferase (Pectobacterium atrosepticum (strain SCRI 1043 / ATCC BAA-672) (Erwinia carotovora subsp. atroseptica)).